Reading from the N-terminus, the 101-residue chain is Small ribosomal subunit protein uS14 (101 aa).

Belongs to the universal ribosomal protein uS14 family. In terms of assembly, part of the 30S ribosomal subunit. Contacts proteins S3 and S10.

Binds 16S rRNA, required for the assembly of 30S particles and may also be responsible for determining the conformation of the 16S rRNA at the A site. The polypeptide is Small ribosomal subunit protein uS14 (Aliivibrio salmonicida (strain LFI1238) (Vibrio salmonicida (strain LFI1238))).